A 177-amino-acid polypeptide reads, in one-letter code: ATP-dependent protease subunit HslV (177 aa).

Residue Thr7 is part of the active site. 3 residues coordinate Na(+): Ala162, Cys165, and Thr168.

This sequence belongs to the peptidase T1B family. HslV subfamily. In terms of assembly, a double ring-shaped homohexamer of HslV is capped on each side by a ring-shaped HslU homohexamer. The assembly of the HslU/HslV complex is dependent on binding of ATP.

Its subcellular location is the cytoplasm. The catalysed reaction is ATP-dependent cleavage of peptide bonds with broad specificity.. Allosterically activated by HslU binding. Functionally, protease subunit of a proteasome-like degradation complex believed to be a general protein degrading machinery. This Leptospira biflexa serovar Patoc (strain Patoc 1 / Ames) protein is ATP-dependent protease subunit HslV.